Here is a 164-residue protein sequence, read N- to C-terminus: Lipoprotein signal peptidase (164 aa).

4 helical membrane-spanning segments follow: residues Leu-6–Leu-26, Val-39–Ala-59, Gly-65–Ala-85, and Thr-88–Ile-108. Catalysis depends on residues Asp-118 and Asp-140. A helical transmembrane segment spans residues Val-141–Val-161.

This sequence belongs to the peptidase A8 family.

The protein resides in the cell inner membrane. The catalysed reaction is Release of signal peptides from bacterial membrane prolipoproteins. Hydrolyzes -Xaa-Yaa-Zaa-|-(S,diacylglyceryl)Cys-, in which Xaa is hydrophobic (preferably Leu), and Yaa (Ala or Ser) and Zaa (Gly or Ala) have small, neutral side chains.. Its pathway is protein modification; lipoprotein biosynthesis (signal peptide cleavage). Its function is as follows. This protein specifically catalyzes the removal of signal peptides from prolipoproteins. The sequence is that of Lipoprotein signal peptidase from Rhodopseudomonas palustris (strain TIE-1).